A 226-amino-acid polypeptide reads, in one-letter code: 7-cyano-7-deazaguanine synthase (226 aa).

9–19 (LSGGLDSTVAT) provides a ligand contact to ATP. Zn(2+) is bound by residues cysteine 192, cysteine 200, cysteine 203, and cysteine 206.

This sequence belongs to the QueC family. Requires Zn(2+) as cofactor.

The catalysed reaction is 7-carboxy-7-deazaguanine + NH4(+) + ATP = 7-cyano-7-deazaguanine + ADP + phosphate + H2O + H(+). Its pathway is purine metabolism; 7-cyano-7-deazaguanine biosynthesis. In terms of biological role, catalyzes the ATP-dependent conversion of 7-carboxy-7-deazaguanine (CDG) to 7-cyano-7-deazaguanine (preQ(0)). The polypeptide is 7-cyano-7-deazaguanine synthase (Methanosphaera stadtmanae (strain ATCC 43021 / DSM 3091 / JCM 11832 / MCB-3)).